The following is a 1099-amino-acid chain: Inverted formin-2 (1099 aa).

The region spanning Met1–Gln330 is the GBD/FH3 domain. Basic and acidic residues-rich tracts occupy residues Ser348 to Thr359 and Gln367 to Pro385. 3 disordered regions span residues Ser348–Pro391, Pro432–Pro509, and Ala1000–Asn1019. The 144-residue stretch at Thr426–Pro569 folds into the FH1 domain. Residues Pro452–Pro499 are compositionally biased toward pro residues. One can recognise an FH2 domain in the interval Phe621–Asp1009. Positions Leu907–Asn1019 form a coiled coil. The region spanning Asp1037–Thr1052 is the WH2 domain. The tract at residues Lys1064–Pro1085 is disordered. A compositionally biased stretch (basic and acidic residues) spans Asn1071 to Glu1083.

It belongs to the formin homology family.

The sequence is that of Inverted formin-2 (inf2) from Xenopus laevis (African clawed frog).